Reading from the N-terminus, the 487-residue chain is Serralysin (487 aa).

Residues 1–16 (MQSTKKAIEITESSLA) constitute a propeptide that is removed on maturation. Residue His-192 participates in Zn(2+) binding. Glu-193 is a catalytic residue. Residues His-196, His-202, and Tyr-232 each coordinate Zn(2+). Ca(2+) contacts are provided by Arg-269, Gly-271, Thr-273, Asp-301, Gly-303, Gly-304, Asp-306, Thr-343, Glu-345, Gly-350, Gly-352, Asp-354, Asn-359, Ala-361, Asn-363, Gly-367, Gly-368, Ala-369, Gly-370, Asp-372, Gly-376, Gly-377, Gly-378, Gly-379, Asp-381, Gly-385, Gly-386, Ala-387, Gly-388, Asp-390, Asp-399, Asp-406, and Asp-416. Hemolysin-type calcium-binding repeat units follow at residues 348-365 (IGGS…NNVL) and 366-383 (KGGA…ADEL).

The protein belongs to the peptidase M10B family. The cofactor is Ca(2+). Zn(2+) is required as a cofactor.

It is found in the secreted. It carries out the reaction Preferential cleavage of bonds with hydrophobic residues in P1'.. In terms of biological role, has insecticidal activity against the locust M.palpalis. When administered orally to locusts at a low dose it causes them to lie on their sides exhibiting sporadic limb movements and muscular twitching, followed by full recovery. When administered at higher doses the same symptoms are observed, followed by death. The polypeptide is Serralysin (Serratia marcescens).